Consider the following 835-residue polypeptide: Protein translocase subunit SecA (835 aa).

Residues Gln85, 103–107 (GEGKT), and Asp492 contribute to the ATP site. The disordered stretch occupies residues 788-807 (VQGEAVHPSSDGEEAKKKPV). Positions 819, 821, 830, and 831 each coordinate Zn(2+).

It belongs to the SecA family. As to quaternary structure, monomer and homodimer. Part of the essential Sec protein translocation apparatus which comprises SecA, SecYEG and auxiliary proteins SecDF. Other proteins may also be involved. Requires Zn(2+) as cofactor.

It is found in the cell membrane. It localises to the cytoplasm. It catalyses the reaction ATP + H2O + cellular proteinSide 1 = ADP + phosphate + cellular proteinSide 2.. Part of the Sec protein translocase complex. Interacts with the SecYEG preprotein conducting channel. Has a central role in coupling the hydrolysis of ATP to the transfer of proteins into and across the cell membrane, serving as an ATP-driven molecular motor driving the stepwise translocation of polypeptide chains across the membrane. The sequence is that of Protein translocase subunit SecA from Bacillus cereus (strain G9842).